A 286-amino-acid chain; its full sequence is E3 SUMO-protein ligase K-bZIP (286 aa).

Disordered stretches follow at residues 1–22 and 106–130; these read MPRMKDIPTKSSPGTDNSEKDE and WTLSHTPPRGPHISQQLPTRRSKRR.

Interacts with host HDAC1 and HDAC2, these interactions suppress HDAC activities. Interacts with protein ORF57. Interacts with protein vPK. Post-translationally, sumoylated.

Its pathway is protein modification; protein sumoylation. Functionally, SUMO E3 ligase that plays a role in viral gene regulation and is essential for viral reactivation. Disrupts host G1 cell cycle control thus allowing viral transcription and translation to proceed at the early stages of infection. Catalyzes its own SUMO modification as well as that of its interacting partners such as host TP53 and RB1. Regulates viral gene expression and reactivation and may mediate the SUMOylation of viral promoters in the low methylated 'Lys-9' histone H3 (H3K9me) region which results in a diminution of viral gene expression after reactivation. SUMOylates also host histone lysine demethylase 4A/KDM4A, an essential step for complete enrichment of SUMO-2/3 on the viral genome during viral transactivation and reactivation. This is E3 SUMO-protein ligase K-bZIP (K8) from Human herpesvirus 8 type P (isolate GK18) (HHV-8).